The sequence spans 132 residues: Transmembrane protein 170B (132 aa).

The Extracellular segment spans residues 1–37 (MRAEGADHSMINLSVQQVLSLWAHGTVLRNLTEMWYW). N-linked (GlcNAc...) asparagine glycosylation occurs at Asn12. A helical transmembrane segment spans residues 38 to 58 (IFLWALFSSLFVHGAAGVLMF). Topologically, residues 59–68 (VMLQRHRQGR) are cytoplasmic. Residues 69–89 (VISIIAVSIGFLASVTGAMIT) traverse the membrane as a helical segment. Residues 90-104 (SAAVAGIYRVAGKNM) lie on the Extracellular side of the membrane. A helical transmembrane segment spans residues 105–125 (APLEALVWGVGQTVLTLIISF). The Cytoplasmic portion of the chain corresponds to 126-132 (SRILATL).

It belongs to the TMEM170 family. As to quaternary structure, interacts with CTNNB1.

It is found in the cell membrane. This Mus musculus (Mouse) protein is Transmembrane protein 170B.